The following is a 511-amino-acid chain: Histidine ammonia-lyase (511 aa).

Positions 143-145 form a cross-link, 5-imidazolinone (Ala-Gly); sequence ASG. At Ser-144 the chain carries 2,3-didehydroalanine (Ser).

This sequence belongs to the PAL/histidase family. In terms of processing, contains an active site 4-methylidene-imidazol-5-one (MIO), which is formed autocatalytically by cyclization and dehydration of residues Ala-Ser-Gly.

The protein localises to the cytoplasm. It catalyses the reaction L-histidine = trans-urocanate + NH4(+). It functions in the pathway amino-acid degradation; L-histidine degradation into L-glutamate; N-formimidoyl-L-glutamate from L-histidine: step 1/3. The chain is Histidine ammonia-lyase from Vibrio cholerae serotype O1 (strain ATCC 39315 / El Tor Inaba N16961).